The following is a 270-amino-acid chain: tRNA pseudouridine synthase A (270 aa).

The Nucleophile role is filled by Asp-60. Tyr-118 is a binding site for substrate.

It belongs to the tRNA pseudouridine synthase TruA family. As to quaternary structure, homodimer.

It carries out the reaction uridine(38/39/40) in tRNA = pseudouridine(38/39/40) in tRNA. Functionally, formation of pseudouridine at positions 38, 39 and 40 in the anticodon stem and loop of transfer RNAs. In Salmonella arizonae (strain ATCC BAA-731 / CDC346-86 / RSK2980), this protein is tRNA pseudouridine synthase A.